Reading from the N-terminus, the 779-residue chain is Endoribonuclease YSH1 (779 aa).

Residues H68, H70, D72, H73, H163, and D184 each contribute to the Zn(2+) site. H408 serves as the catalytic Proton donor. Residue H430 participates in Zn(2+) binding. At S517 the chain carries Phosphoserine; by ATM or ATR.

It belongs to the metallo-beta-lactamase superfamily. RNA-metabolizing metallo-beta-lactamase-like family. CPSF2/YSH1 subfamily. In terms of assembly, component of the cleavage and polyadenylation factor (CPF) complex, which is composed of at least PTI1, SYC1, SSU72, GLC7, MPE1, REF2, PFS2, PTA1, YSH1/BRR5, SWD2, CFT2/YDH1, YTH1, CFT1/YHH1, FIP1 and PAP1. Interacts with FIP1, PFS2, RNA14 and YTH1. Requires Zn(2+) as cofactor.

It localises to the nucleus. Functionally, component of the cleavage and polyadenylation factor (CPF) complex, which plays a key role in polyadenylation-dependent pre-mRNA 3'-end formation and cooperates with cleavage factors including the CFIA complex and NAB4/CFIB. Has endonuclease activity. This is Endoribonuclease YSH1 (YSH1) from Saccharomyces cerevisiae (strain ATCC 204508 / S288c) (Baker's yeast).